Reading from the N-terminus, the 782-residue chain is E3 UFM1-protein ligase 1 homolog (782 aa).

Residues 404 to 477 form a disordered region; the sequence is NASTQELEDD…GSRGGGGVNK (74 aa). Basic residues predominate over residues 443–453; sequence KSTKKHQRGKA.

Belongs to the UFL1 family.

Its function is as follows. E3 UFM1-protein ligase that mediates ufmylation of target proteins. The protein is E3 UFM1-protein ligase 1 homolog of Drosophila erecta (Fruit fly).